The chain runs to 327 residues: Movement protein (327 aa).

Positions 297–327 form a coiled coil; it reads SASSSNTENELARVSQNIDLLKNKLKEICGE.

Belongs to the caulimoviridae movement protein family. In terms of assembly, homotrimer, through the coiled-coil domain. Interacts with VAP. May interact (via N-terminus) with host prenylated Rab acceptor protein 1D (PRA1D).

The protein resides in the host cell junction. It localises to the host plasmodesma. In terms of biological role, transports viral genome to neighboring plant cells directly through plasmosdesmata, without any budding. The movement protein allows efficient cell to cell propagation, by bypassing the host cell wall barrier. Acts by forming tubules structures that increase the size exclusion limit (SEL) of plasmodesmata, thereby allowing viral ribonucleocapsids to spread directly to neighboring cells. The sequence is that of Movement protein from Cauliflower mosaic virus (strain W260) (CaMV).